The primary structure comprises 387 residues: S-adenosylmethionine synthase (387 aa).

Residue histidine 16 coordinates ATP. Aspartate 18 contacts Mg(2+). Glutamate 44 is a binding site for K(+). Residues glutamate 57 and glutamine 100 each contribute to the L-methionine site. The flexible loop stretch occupies residues 100–110 (QSPDIAQGVDR). Residues 167 to 169 (DAK), 232 to 233 (RF), aspartate 241, 247 to 248 (RK), alanine 264, and lysine 268 contribute to the ATP site. Aspartate 241 provides a ligand contact to L-methionine. Lysine 272 is a binding site for L-methionine.

It belongs to the AdoMet synthase family. Homotetramer; dimer of dimers. Mg(2+) is required as a cofactor. The cofactor is K(+).

The protein resides in the cytoplasm. It carries out the reaction L-methionine + ATP + H2O = S-adenosyl-L-methionine + phosphate + diphosphate. Its pathway is amino-acid biosynthesis; S-adenosyl-L-methionine biosynthesis; S-adenosyl-L-methionine from L-methionine: step 1/1. In terms of biological role, catalyzes the formation of S-adenosylmethionine (AdoMet) from methionine and ATP. The overall synthetic reaction is composed of two sequential steps, AdoMet formation and the subsequent tripolyphosphate hydrolysis which occurs prior to release of AdoMet from the enzyme. The protein is S-adenosylmethionine synthase of Cupriavidus metallidurans (strain ATCC 43123 / DSM 2839 / NBRC 102507 / CH34) (Ralstonia metallidurans).